Here is a 65-residue protein sequence, read N- to C-terminus: Large ribosomal subunit protein uL29 (65 aa).

This sequence belongs to the universal ribosomal protein uL29 family.

The polypeptide is Large ribosomal subunit protein uL29 (Coxiella burnetii (strain CbuK_Q154) (Coxiella burnetii (strain Q154))).